The following is a 506-amino-acid chain: Maturase K (506 aa).

This sequence belongs to the intron maturase 2 family. MatK subfamily.

The protein localises to the plastid. Its subcellular location is the chloroplast. Usually encoded in the trnK tRNA gene intron. Probably assists in splicing its own and other chloroplast group II introns. The polypeptide is Maturase K (Medicago truncatula (Barrel medic)).